A 904-amino-acid polypeptide reads, in one-letter code: Thiamine diphosphate dependent-3-acetyloctanal synthase PigD (904 aa).

The disordered stretch occupies residues 879 to 904 (RKAWAAQQPESTSTAFDQDPTQEATS). Residues 886-904 (QPESTSTAFDQDPTQEATS) are compositionally biased toward polar residues.

Belongs to the TPP enzyme family. It depends on thiamine diphosphate as a cofactor.

It catalyses the reaction (2E)-octenal + pyruvate + H(+) = (S)-3-acetyloctanal + CO2. Its pathway is antibiotic biosynthesis; prodigiosin biosynthesis. Functionally, involved in the biosynthesis of 2-methyl-3-n-amyl-pyrrole (MAP), one of the terminal products involved in the biosynthesis of the red antibiotic prodigiosin (Pig). Catalyzes the decarboxylation of pyruvate, followed by the modification of the resulting two-carbon fragment acetaldehyde at the C3 position of the 2-octenal (1,2-addition of acetaldehyde) giving 3-acetyloctanal. In vitro, it can act on a number of alpha,beta-unsaturated carbonyl compounds, including aldehydes and ketones, and can catalyze both 1,2-addition and Stetter-type 1,4-addition depending on the substrate. The sequence is that of Thiamine diphosphate dependent-3-acetyloctanal synthase PigD from Serratia marcescens.